Consider the following 218-residue polypeptide: Epoxyqueuosine reductase QueH (218 aa).

[4Fe-4S] cluster contacts are provided by C22, C23, C101, and C104. C184 and C186 are oxidised to a cystine.

It belongs to the QueH family.

It carries out the reaction epoxyqueuosine(34) in tRNA + AH2 = queuosine(34) in tRNA + A + H2O. Its pathway is tRNA modification; tRNA-queuosine biosynthesis. Its function is as follows. Catalyzes the conversion of epoxyqueuosine (oQ) to queuosine (Q), which is a hypermodified base found in the wobble positions of tRNA(Asp), tRNA(Asn), tRNA(His) and tRNA(Tyr). The sequence is that of Epoxyqueuosine reductase QueH from Acinetobacter baylyi (strain ATCC 33305 / BD413 / ADP1).